Reading from the N-terminus, the 489-residue chain is tRNA(Ile)-lysidine synthase (489 aa).

35–40 (SGGLDS) lines the ATP pocket.

The protein belongs to the tRNA(Ile)-lysidine synthase family.

It localises to the cytoplasm. The catalysed reaction is cytidine(34) in tRNA(Ile2) + L-lysine + ATP = lysidine(34) in tRNA(Ile2) + AMP + diphosphate + H(+). In terms of biological role, ligates lysine onto the cytidine present at position 34 of the AUA codon-specific tRNA(Ile) that contains the anticodon CAU, in an ATP-dependent manner. Cytidine is converted to lysidine, thus changing the amino acid specificity of the tRNA from methionine to isoleucine. In Burkholderia mallei (strain ATCC 23344), this protein is tRNA(Ile)-lysidine synthase.